Here is a 172-residue protein sequence, read N- to C-terminus: Ribosome maturation factor RimM (172 aa).

In terms of domain architecture, PRC barrel spans 96–168 (EGEFYYHEII…RVDVEIPEGL (73 aa)).

The protein belongs to the RimM family. In terms of assembly, binds ribosomal protein uS19.

Its subcellular location is the cytoplasm. Its function is as follows. An accessory protein needed during the final step in the assembly of 30S ribosomal subunit, possibly for assembly of the head region. Essential for efficient processing of 16S rRNA. May be needed both before and after RbfA during the maturation of 16S rRNA. It has affinity for free ribosomal 30S subunits but not for 70S ribosomes. This chain is Ribosome maturation factor RimM, found in Streptococcus gordonii (strain Challis / ATCC 35105 / BCRC 15272 / CH1 / DL1 / V288).